The primary structure comprises 555 residues: Dihydroxy-acid dehydratase (555 aa).

Asp78 lines the Mg(2+) pocket. Cys119 is a binding site for [2Fe-2S] cluster. Positions 120 and 121 each coordinate Mg(2+). Lys121 bears the N6-carboxylysine mark. Position 191 (Cys191) interacts with [2Fe-2S] cluster. Glu444 provides a ligand contact to Mg(2+). Ser470 acts as the Proton acceptor in catalysis.

This sequence belongs to the IlvD/Edd family. In terms of assembly, homodimer. Requires [2Fe-2S] cluster as cofactor. Mg(2+) serves as cofactor.

It carries out the reaction (2R)-2,3-dihydroxy-3-methylbutanoate = 3-methyl-2-oxobutanoate + H2O. The enzyme catalyses (2R,3R)-2,3-dihydroxy-3-methylpentanoate = (S)-3-methyl-2-oxopentanoate + H2O. It functions in the pathway amino-acid biosynthesis; L-isoleucine biosynthesis; L-isoleucine from 2-oxobutanoate: step 3/4. The protein operates within amino-acid biosynthesis; L-valine biosynthesis; L-valine from pyruvate: step 3/4. Functionally, functions in the biosynthesis of branched-chain amino acids. Catalyzes the dehydration of (2R,3R)-2,3-dihydroxy-3-methylpentanoate (2,3-dihydroxy-3-methylvalerate) into 2-oxo-3-methylpentanoate (2-oxo-3-methylvalerate) and of (2R)-2,3-dihydroxy-3-methylbutanoate (2,3-dihydroxyisovalerate) into 2-oxo-3-methylbutanoate (2-oxoisovalerate), the penultimate precursor to L-isoleucine and L-valine, respectively. The chain is Dihydroxy-acid dehydratase from Oleidesulfovibrio alaskensis (strain ATCC BAA-1058 / DSM 17464 / G20) (Desulfovibrio alaskensis).